The sequence spans 213 residues: Ras-related protein Rab-25 (213 aa).

The GTP site is built by serine 21, glycine 24, lysine 25, threonine 26, asparagine 27, serine 38, histidine 39, threonine 43, and threonine 44. A Mg(2+)-binding site is contributed by threonine 26. Short sequence motifs (switch) lie at residues 35–49 (NEFSHDSRTTIGVEF) and 67–84 (DTAGLERYRAITSAYYRG). Positions 44 and 67 each coordinate Mg(2+). GTP-binding residues include glycine 70, asparagine 125, lysine 126, aspartate 128, alanine 156, and leucine 157. 2 S-geranylgeranyl cysteine lipidation sites follow: cysteine 209 and cysteine 210. Cysteine 210 bears the Cysteine methyl ester mark. A propeptide spans 211 to 213 (ISL) (removed in mature form).

Belongs to the small GTPase superfamily. Rab family. In terms of assembly, interacts (GTP-bound form) with RAB11FIP1, RAB11FIP2, RAB11FIP3 and RAB11FIP4. Interacts (via the hypervariable C-terminal region) with ITGB1 (via the cytoplasmic region); the interaction is GTP-dependent. Interacts with ITGAV. Associates with the integrin alpha-V/beta-1 heterodimer. Interacts with VPS33B. Mg(2+) is required as a cofactor. Expression is restricted to epithelial cells. Expressed in ovarian epithelium (NOE) and breast tissue. Expressed in ovarian cancer; expression is increased relative to NOE cells. Expression in ovarian cancer is stage dependent, with stage III and stage IV showing higher levels than early stage cancers. Expressed in breast cancer; expression is increased relative to normal breast tissue.

It is found in the cell membrane. The protein resides in the cytoplasmic vesicle. Its subcellular location is the cell projection. The protein localises to the pseudopodium membrane. The enzyme catalyses GTP + H2O = GDP + phosphate + H(+). Its activity is regulated as follows. Regulated by guanine nucleotide exchange factors (GEFs) which promote the exchange of bound GDP for free GTP. Regulated by GTPase activating proteins (GAPs) which increase the GTP hydrolysis activity. Inhibited by GDP dissociation inhibitors (GDIs) which prevent Rab-GDP dissociation. Functionally, the small GTPases Rab are key regulators of intracellular membrane trafficking, from the formation of transport vesicles to their fusion with membranes. Rabs cycle between an inactive GDP-bound form and an active GTP-bound form that is able to recruit to membranes different set of downstream effectors directly responsible for vesicle formation, movement, tethering and fusion. RAB25 regulates epithelial cell differentiation, proliferation and survival, thereby playing key roles in tumorigenesis. Promotes invasive migration of cells in which it functions to localize and maintain integrin alpha-V/beta-1 at the tips of extending pseudopodia. Involved in the regulation of epithelial morphogenesis through the control of CLDN4 expression and localization at tight junctions. May selectively regulate the apical recycling pathway. Together with MYO5B regulates transcytosis. The chain is Ras-related protein Rab-25 from Homo sapiens (Human).